Reading from the N-terminus, the 92-residue chain is MARSLKKGPFVADHLLKKIEYLNARREKQVITTWSRGSTIVPIMIGHTIAVYNGREHLPIFVTDQMVGHKLGEFSPTRTFRGHVKSDKKSRR.

The protein belongs to the universal ribosomal protein uS19 family.

It is found in the plastid. The protein localises to the chloroplast. Its function is as follows. Protein S19 forms a complex with S13 that binds strongly to the 16S ribosomal RNA. The chain is Small ribosomal subunit protein uS19c from Chlorokybus atmophyticus (Soil alga).